We begin with the raw amino-acid sequence, 549 residues long: Cation/acetate symporter ActP (549 aa).

13 helical membrane-spanning segments follow: residues 33 to 53, 77 to 97, 103 to 123, 148 to 168, 183 to 203, 206 to 226, 262 to 282, 303 to 323, 355 to 375, 404 to 424, 428 to 448, 464 to 484, and 493 to 513; these read WQAI…TYWA, LAIA…ALVF, GLIY…LIAE, ILSA…QMVG, IAVV…GMLA, WVQI…AFMV, ISAL…PHIL, GFMG…IMLV, LFLG…VAGL, VSKI…VLFE, IAFM…PIIL, GGWL…TIWV, and IFPY…GIWF.

This sequence belongs to the sodium:solute symporter (SSF) (TC 2.A.21) family.

It localises to the cell inner membrane. Its function is as follows. Transports acetate. This chain is Cation/acetate symporter ActP, found in Escherichia coli O8 (strain IAI1).